The chain runs to 616 residues: Protein RIK (616 aa).

The span at 1-11 (MTEDRAHKVAD) shows a compositional bias: basic and acidic residues. Residues 1-32 (MTEDRAHKVADEPAASGRQSPERKKRKWDQPA) form a disordered region. In terms of domain architecture, KH spans 198–304 (GTTSESISVP…AKVLAENLLD (107 aa)). Polar residues-rich tracts occupy residues 432-449 (TQAV…TKGN), 475-484 (TESQNSQQGS), and 491-502 (LDSSGNIGSSSI). 2 disordered regions span residues 432–455 (TQAV…LDAE) and 467–616 (LPVS…HTCV). Positions 534 to 564 (LPPPLKSMLPLPPRSMPPPPPKSMPPPPPKF) are enriched in pro residues. Basic and acidic residues-rich tracts occupy residues 565 to 575 (PSDEFLSRNEN) and 598 to 610 (SERR…EEKN).

In terms of assembly, interacts with RS2. As to expression, expressed in vegetative tissues. More abundant in apices and young leaf primordia than in fully expanded leaf tissues.

The protein resides in the nucleus. The sequence is that of Protein RIK from Zea mays (Maize).